A 476-amino-acid polypeptide reads, in one-letter code: MVATPSATTGLQVAQDYVIADINQAEFGRKELDIAETEMPGLMALREKYGTEKPLKGARIAGSLHMTIQTACLIETLVELGAEVRWASCNIFSTQDHAAAAMAARDIPVFAVKGETLEEYWEYTHRILEWGDGGSPNMILDDGGDATGLVMLGSKAEQDITVLDNPGNEEETFLFASIKKKLAQDPTFYSRTKAQIQGVTEETTTGVARLYKMQKSGELPFPAINVNDSVTKSKFDNLYGCRESLVDSIKRATDVMVAGKQALVMGYGDVGKGSAQSLRGLGATVCIAEVDPICALQAAMEGYRVVRLEDVVEDMDIFVTATGNYQVIRNEHLLKMKDEAIVCNIGHFDNEIDVASLKDYEWENIKPQVDHITLPSGNRIILLAEGRLVNLGCATGHPSFVMSNSFTNQVLAQIELFTKGNEYGKEVYVLPKHLDEMVARLHLDRIGAKLTELSKDQADYINVPVEGPFKPDHYRY.

Substrate-binding residues include Thr-67, Asp-142, and Glu-202. 203–205 (TTT) provides a ligand contact to NAD(+). Substrate is bound by residues Lys-232 and Asp-236. NAD(+) is bound by residues Asn-237, 266 to 271 (GYGDVG), Glu-289, Asn-324, 345 to 347 (IGH), and Asn-390.

This sequence belongs to the adenosylhomocysteinase family. It depends on NAD(+) as a cofactor.

It localises to the cytoplasm. It catalyses the reaction S-adenosyl-L-homocysteine + H2O = L-homocysteine + adenosine. Its pathway is amino-acid biosynthesis; L-homocysteine biosynthesis; L-homocysteine from S-adenosyl-L-homocysteine: step 1/1. May play a key role in the regulation of the intracellular concentration of adenosylhomocysteine. This is Adenosylhomocysteinase from Synechococcus sp. (strain WH7803).